Reading from the N-terminus, the 256-residue chain is Large ribosomal subunit protein eL8A (256 aa).

A disordered region spans residues 1 to 37; it reads MAPGKKVAPAPFGAKSTKSNKTRNPLTHSTPKNFGIG. The span at 16–32 shows a compositional bias: polar residues; sequence STKSNKTRNPLTHSTPK.

Belongs to the eukaryotic ribosomal protein eL8 family. As to quaternary structure, component of the large ribosomal subunit (LSU). Mature yeast ribosomes consist of a small (40S) and a large (60S) subunit. The 40S small subunit contains 1 molecule of ribosomal RNA (18S rRNA) and 33 different proteins (encoded by 57 genes). The large 60S subunit contains 3 rRNA molecules (25S, 5.8S and 5S rRNA) and 46 different proteins (encoded by 81 genes).

It is found in the cytoplasm. In terms of biological role, component of the ribosome, a large ribonucleoprotein complex responsible for the synthesis of proteins in the cell. The small ribosomal subunit (SSU) binds messenger RNAs (mRNAs) and translates the encoded message by selecting cognate aminoacyl-transfer RNA (tRNA) molecules. The large subunit (LSU) contains the ribosomal catalytic site termed the peptidyl transferase center (PTC), which catalyzes the formation of peptide bonds, thereby polymerizing the amino acids delivered by tRNAs into a polypeptide chain. The nascent polypeptides leave the ribosome through a tunnel in the LSU and interact with protein factors that function in enzymatic processing, targeting, and the membrane insertion of nascent chains at the exit of the ribosomal tunnel. The sequence is that of Large ribosomal subunit protein eL8A from Saccharomyces cerevisiae (strain ATCC 204508 / S288c) (Baker's yeast).